The primary structure comprises 245 residues: MIIPAIDLIDGQVVRLFQGDYAKKTEFSLDPKNQLLSYQQDGAALLHLVDLTGAKDPDKRQTKLIEEIAASLSTPLQVGGGIRSAADVDALLNAGVARVVIGSLAVKSPEVVLRLFDKYGGDAICLALDVNIDADGNKMVAVHGWQQGGGKSLESLVDTFMPAGLKHALVTDISRDGTMTGANTALYCELAERFNEVQWQASGGVATLDDVKAVKTSGASGIIIGKALLTGVFSAKEAIACWPNV.

D7 (proton acceptor) is an active-site residue. Residue D129 is the Proton donor of the active site.

The protein belongs to the HisA/HisF family.

Its subcellular location is the cytoplasm. The catalysed reaction is 1-(5-phospho-beta-D-ribosyl)-5-[(5-phospho-beta-D-ribosylamino)methylideneamino]imidazole-4-carboxamide = 5-[(5-phospho-1-deoxy-D-ribulos-1-ylimino)methylamino]-1-(5-phospho-beta-D-ribosyl)imidazole-4-carboxamide. It participates in amino-acid biosynthesis; L-histidine biosynthesis; L-histidine from 5-phospho-alpha-D-ribose 1-diphosphate: step 4/9. This Shewanella amazonensis (strain ATCC BAA-1098 / SB2B) protein is 1-(5-phosphoribosyl)-5-[(5-phosphoribosylamino)methylideneamino] imidazole-4-carboxamide isomerase.